The primary structure comprises 498 residues: Guanosine-5'-triphosphate,3'-diphosphate pyrophosphatase (498 aa).

This sequence belongs to the GppA/Ppx family. GppA subfamily.

The catalysed reaction is guanosine 3'-diphosphate 5'-triphosphate + H2O = guanosine 3',5'-bis(diphosphate) + phosphate + H(+). It participates in purine metabolism; ppGpp biosynthesis; ppGpp from GTP: step 2/2. Functionally, catalyzes the conversion of pppGpp to ppGpp. Guanosine pentaphosphate (pppGpp) is a cytoplasmic signaling molecule which together with ppGpp controls the 'stringent response', an adaptive process that allows bacteria to respond to amino acid starvation, resulting in the coordinated regulation of numerous cellular activities. The sequence is that of Guanosine-5'-triphosphate,3'-diphosphate pyrophosphatase from Pectobacterium carotovorum subsp. carotovorum (strain PC1).